The following is a 669-amino-acid chain: Glycerol uptake/efflux facilitator protein (669 aa).

The span at 1-16 (MSNPQKALNDFLSSES) shows a compositional bias: polar residues. Disordered stretches follow at residues 1-99 (MSNP…TYVP) and 123-147 (QDINHKDNGPPSASSNRAFRPRGQT). Residues 1 to 254 (MSNPQKALND…WSSVKNTYLK (254 aa)) lie on the Extracellular side of the membrane. Over residues 50 to 68 (NNNNNNNNNNNNSNNNNNG) the composition is skewed to low complexity. Residues 72-81 (GNDDDYDYEM) show a composition bias toward acidic residues. Composition is skewed to polar residues over residues 87–99 (SPQSARPTPTYVP) and 133–147 (PSASSNRAFRPRGQT). Ser150 carries the post-translational modification Phosphoserine. Residues 167–215 (HTIPESHLSRRRSRSRATSNAGHSANTGATNGRTTGAQTNMESNESPRN) form a disordered region. Phosphothreonine is present on Thr168. The segment covering 191 to 206 (ANTGATNGRTTGAQTN) has biased composition (low complexity). 2 positions are modified to phosphoserine: Ser209 and Ser212. A helical membrane pass occupies residues 255–275 (EFLAEFMGTMVMIIFGSAVVC). Topologically, residues 276–325 (QVNVAGKIQQDNFNVALDNLNVTGSSAETIDAMKSLTSLVSSVAGGTFDD) are cytoplasmic. A helical transmembrane segment spans residues 326-346 (VALGWAAAVVMGYFCAGGSAI). At 347-369 (SGAHLNPSITLANLVYRGFPLKK) the chain is on the extracellular side. The NPA 1 motif lies at 352-354 (NPS). A helical membrane pass occupies residues 370–390 (VPYYFAGQLIGAFTGALILFI). At 391 to 446 (WYKRVLQEAYSDWWMNESVAGMFCVFPKPYLSSGRQFFSEFLCGAMLQAGTFALTD) the chain is on the cytoplasmic side. A helical transmembrane segment spans residues 447-467 (PYTCLSSDVFPLMMFILIFII). The Extracellular portion of the chain corresponds to 468-506 (NASMAYQTGTAMNLARDLGPRLALYAVGFDHKMLWVHHH). The NPA 2 signature appears at 480–482 (NLA). The chain crosses the membrane as a helical span at residues 507 to 527 (HFFWVPMVGPFIGALMGGLVY). The Cytoplasmic segment spans residues 528–669 (DVCIYQGHES…SHYGNAKKVT (142 aa)). Disordered stretches follow at residues 591 to 615 (LQKTKTKSSISDNENEAGEKKVQFK) and 635 to 669 (DSIETASLGATTTDSIGLSDTSSEDSHYGNAKKVT). The segment covering 638 to 655 (ETASLGATTTDSIGLSDT) has biased composition (polar residues).

Belongs to the MIP/aquaporin (TC 1.A.8) family.

The protein resides in the membrane. Channel protein for glycerol. Has a role in both glycerol influx and efflux. Plays a role in osmoregulation: under osmotic stress the channel is apparently closed to allow accumulation of glycerol in the cell under hyperosmotic conditions. The protein is Glycerol uptake/efflux facilitator protein (FPS1) of Saccharomyces cerevisiae (strain ATCC 204508 / S288c) (Baker's yeast).